We begin with the raw amino-acid sequence, 101 residues long: Protein Tat (101 aa).

Residues 1-24 are interaction with human CREBBP; sequence MDPVDPKLEPWNHPGSQPTTPCNK. The segment at 1 to 48 is transactivation; the sequence is MDPVDPKLEPWNHPGSQPTTPCNKCYCKVCCWHCQVCFLNKGLGISYG. Positions 22, 25, and 27 each coordinate Zn(2+). The segment at 22–37 is cysteine-rich; the sequence is CNKCYCKVCCWHCQVC. At Lys28 the chain carries N6-acetyllysine; by host PCAF. Zn(2+) contacts are provided by Cys30, His33, Cys34, and Cys37. Positions 38–48 are core; the sequence is FLNKGLGISYG. The tract at residues 48–101 is disordered; that stretch reads GRKKRRPRRGTPQGSKDHQNPVPKQPLPITSGNPTGSEKPKKEVASKTETDPLD. Residues 49-57 carry the Nuclear localization signal, RNA-binding (TAR), and protein transduction motif; it reads RKKRRPRRG. The interaction with the host capping enzyme RNGTT stretch occupies residues 49–86; that stretch reads RKKRRPRRGTPQGSKDHQNPVPKQPLPITSGNPTGSEK. Residues Lys50 and Lys51 each carry the N6-acetyllysine; by host EP300 and GCN5L2 modification. Asymmetric dimethylarginine; by host PRMT6 is present on residues Arg52 and Arg53. Lys71 is covalently cross-linked (Glycyl lysine isopeptide (Lys-Gly) (interchain with G-Cter in ubiquitin)). Residues 85 to 101 show a composition bias toward basic and acidic residues; it reads EKPKKEVASKTETDPLD.

The protein belongs to the lentiviruses Tat family. As to quaternary structure, interacts with host CCNT1. Associates with the P-TEFb complex composed at least of Tat, P-TEFb (CDK9 and CCNT1), TAR RNA, RNA Pol II. Recruits the HATs CREBBP, TAF1/TFIID, EP300, PCAF and GCN5L2. Interacts with host KAT5/Tip60; this interaction targets the latter to degradation. Interacts with the host deacetylase SIRT1. Interacts with host capping enzyme RNGTT; this interaction stimulates RNGTT. Binds to host KDR, and to the host integrins ITGAV/ITGB3 and ITGA5/ITGB1. Interacts with host KPNB1/importin beta-1 without previous binding to KPNA1/importin alpha-1. Interacts with EIF2AK2. Interacts with host nucleosome assembly protein NAP1L1; this interaction may be required for the transport of Tat within the nucleus, since the two proteins interact at the nuclear rim. Interacts with host C1QBP/SF2P32; this interaction involves lysine-acetylated Tat. Interacts with the host chemokine receptors CCR2, CCR3 and CXCR4. Interacts with host DPP4/CD26; this interaction may trigger an anti-proliferative effect. Interacts with host LDLR. Interacts with the host extracellular matrix metalloproteinase MMP1. Interacts with host PRMT6; this interaction mediates Tat's methylation. Interacts with, and is ubiquitinated by MDM2/Hdm2. Interacts with host PSMC3 and HTATIP2. Interacts with STAB1; this interaction may overcome SATB1-mediated repression of IL2 and IL2RA (interleukin) in T cells by binding to the same domain than HDAC1. Interacts (when acetylated) with human CDK13, thereby increasing HIV-1 mRNA splicing and promoting the production of the doubly spliced HIV-1 protein Nef. Interacts with host TBP; this interaction modulates the activity of transcriptional pre-initiation complex. Interacts with host RELA. Interacts with host PLSCR1; this interaction negatively regulates Tat transactivation activity by altering its subcellular distribution. In terms of processing, asymmetrical arginine methylation by host PRMT6 seems to diminish the transactivation capacity of Tat and affects the interaction with host CCNT1. Acetylation by EP300, CREBBP, GCN5L2/GCN5 and PCAF regulates the transactivation activity of Tat. EP300-mediated acetylation of Lys-50 promotes dissociation of Tat from the TAR RNA through the competitive binding to PCAF's bromodomain. In addition, the non-acetylated Tat's N-terminus can also interact with PCAF. PCAF-mediated acetylation of Lys-28 enhances Tat's binding to CCNT1. Lys-50 is deacetylated by SIRT1. Post-translationally, polyubiquitination by host MDM2 does not target Tat to degradation, but activates its transactivation function and fosters interaction with CCNT1 and TAR RNA. In terms of processing, phosphorylated by EIF2AK2 on serine and threonine residues adjacent to the basic region important for TAR RNA binding and function. Phosphorylation of Tat by EIF2AK2 is dependent on the prior activation of EIF2AK2 by dsRNA.

It localises to the host nucleus. It is found in the host nucleolus. The protein localises to the host cytoplasm. Its subcellular location is the secreted. In terms of biological role, transcriptional activator that increases RNA Pol II processivity, thereby increasing the level of full-length viral transcripts. Recognizes a hairpin structure at the 5'-LTR of the nascent viral mRNAs referred to as the transactivation responsive RNA element (TAR) and recruits the cyclin T1-CDK9 complex (P-TEFb complex) that will in turn hyperphosphorylate the RNA polymerase II to allow efficient elongation. The CDK9 component of P-TEFb and other Tat-activated kinases hyperphosphorylate the C-terminus of RNA Pol II that becomes stabilized and much more processive. Other factors such as HTATSF1/Tat-SF1, SUPT5H/SPT5, and HTATIP2 are also important for Tat's function. Besides its effect on RNA Pol II processivity, Tat induces chromatin remodeling of proviral genes by recruiting the histone acetyltransferases (HATs) CREBBP, EP300 and PCAF to the chromatin. This also contributes to the increase in proviral transcription rate, especially when the provirus integrates in transcriptionally silent region of the host genome. To ensure maximal activation of the LTR, Tat mediates nuclear translocation of NF-kappa-B by interacting with host RELA. Through its interaction with host TBP, Tat may also modulate transcription initiation. Tat can reactivate a latently infected cell by penetrating in it and transactivating its LTR promoter. In the cytoplasm, Tat is thought to act as a translational activator of HIV-1 mRNAs. Functionally, extracellular circulating Tat can be endocytosed by surrounding uninfected cells via the binding to several surface receptors such as CD26, CXCR4, heparan sulfate proteoglycans (HSPG) or LDLR. Neurons are rarely infected, but they internalize Tat via their LDLR. Through its interaction with nuclear HATs, Tat is potentially able to control the acetylation-dependent cellular gene expression. Modulates the expression of many cellular genes involved in cell survival, proliferation or in coding for cytokines or cytokine receptors. Tat plays a role in T-cell and neurons apoptosis. Tat induced neurotoxicity and apoptosis probably contribute to neuroAIDS. Circulating Tat also acts as a chemokine-like and/or growth factor-like molecule that binds to specific receptors on the surface of the cells, affecting many cellular pathways. In the vascular system, Tat binds to ITGAV/ITGB3 and ITGA5/ITGB1 integrins dimers at the surface of endothelial cells and competes with bFGF for heparin-binding sites, leading to an excess of soluble bFGF. This chain is Protein Tat, found in Homo sapiens (Human).